Reading from the N-terminus, the 310-residue chain is MQSARNEQRGTGPESPHAASPTEGFEVLLITGMSGAGRSHAAHSIEDMGWYVVDNMPPKLLEPMVDMMTASKSGFHKLAAVIDVRSRDYFMDLSSVLSHLDDLGLKTRILFLDADDNVLVKRFESVRRPHPLQQGNRLIDGIHEERRLLENLEERADIVINTSKLSIHQLSTKLYEALTGNGPTTVSVHIFSFGFKYGIPIDADFVADVRFLPNPYWVPQLRELNGHDAPVSEYVLSNDKATQFLDAYEKAIEIAIQGYAQEDKHYVTIAIGCTGGQHRSVAMSEALASRLRSHGLSVSVSARELDRKTQ.

The tract at residues 1 to 21 (MQSARNEQRGTGPESPHAASP) is disordered. Position 32 to 39 (32 to 39 (GMSGAGRS)) interacts with ATP. Residue 83–86 (DVRS) coordinates GTP.

Belongs to the RapZ-like family.

Its function is as follows. Displays ATPase and GTPase activities. This chain is Nucleotide-binding protein BLA_1368, found in Bifidobacterium animalis subsp. lactis (strain AD011).